The following is a 309-amino-acid chain: Probable ABC transporter permease protein y4oQ (309 aa).

7 helical membrane-spanning segments follow: residues 25–45 (VVWFTMPAAAIMLLVLGVPLV), 89–109 (LIYAVVAVSLECALGILFAVL), 123–143 (LMLIPMVITPAVVGIFWKLLY), 174–194 (VIIVDVWQSTPFFTLIILAGL), 221–241 (LPHLVPYIMIAAAFRIIGVMA), 246–266 (IFLLTLGGPGNVTTTLSVYAY), and 278–298 (TTAISWIYVVFVLAISAPLIW). Residues 85-296 (IRVTLIYAVV…VFVLAISAPL (212 aa)) enclose the ABC transmembrane type-1 domain.

Belongs to the binding-protein-dependent transport system permease family. MalFG subfamily.

The protein resides in the cell inner membrane. In terms of biological role, probably part of the binding-protein-dependent transport system y4oPQRS. This system probably transports a sugar-like molecule. Probably responsible for the translocation of the substrate across the membrane. The sequence is that of Probable ABC transporter permease protein y4oQ from Sinorhizobium fredii (strain NBRC 101917 / NGR234).